Here is a 158-residue protein sequence, read N- to C-terminus: Snaclec convulxin subunit alpha (158 aa).

Residues 1–23 form the signal peptide; the sequence is MGRFIFVSFGLLVLFLSLSGTGA. 3 disulfide bridges follow: Cys-27/Cys-38, Cys-55/Cys-152, and Cys-127/Cys-144. A C-type lectin domain is found at 34–158; it reads YDQHCYRIFN…PFVCKFPPQC (125 aa).

This sequence belongs to the snaclec family. Tetramer of heterodimers of alpha and beta subunits (alphabeta)(4); disulfide-linked. In terms of tissue distribution, expressed by the venom gland.

It is found in the secreted. Its function is as follows. Snake venom lectin that activates platelets by binding to the platelet collagen receptor glycoprotein VI (GP6). The indirect activation of integrin alpha-IIb/beta-3 (ITGA2B/ITGB3) also induced by the toxin is upstream the cytoskeletal translocation of GPIb, FcRgamma (FCER1G) and 14-3-3zeta (YWHAZ). This chain is Snaclec convulxin subunit alpha, found in Crotalus durissus terrificus (South American rattlesnake).